Here is a 494-residue protein sequence, read N- to C-terminus: Ammonium transporter Rh type C (494 aa).

Over 1 to 22 the chain is Cytoplasmic; sequence MGNFIQGCKDYFSQQKNTNIRL. Residues 23–43 traverse the membrane as a helical segment; the sequence is TLPVVCFVWQIAMIILFGVFI. Residues 44 to 74 are Extracellular-facing; the sequence is RYDEESDTHWVETKAHDNITSDIENDFYFRY. N-linked (GlcNAc...) asparagine glycosylation occurs at N61. The chain crosses the membrane as a helical span at residues 75–95; sequence PSFQDVHVMIFVGFGFLMTFL. Residues 96 to 99 are Cytoplasmic-facing; that stretch reads KRYS. Residues 100 to 120 form a helical membrane-spanning segment; the sequence is FGAVGFNFLIASFGLQWALLM. The Extracellular segment spans residues 121–133; it reads QGWFHSLDPQTGK. The helical transmembrane segment at 134 to 154 threads the bilayer; sequence IFIGVESLINADFCVAGCLIA. Residues 155-166 lie on the Cytoplasmic side of the membrane; that stretch reads YGAVLGKVSPVQ. The chain crosses the membrane as a helical span at residues 167–187; sequence LLVMTLFGVTLFAVEEYIILN. Residues 188 to 194 lie on the Extracellular side of the membrane; it reads LLHARDA. The chain crosses the membrane as a helical span at residues 195–215; sequence GGSMVIHTFGGYYGLTISWVL. Residues 216-234 lie on the Cytoplasmic side of the membrane; that stretch reads YRPNLHQSKRMQGSVYHSD. The helical transmembrane segment at 235 to 255 threads the bilayer; the sequence is IFAMIGTLFLWMFWPSFNSAI. At 256 to 265 the chain is on the extracellular side; the sequence is TDHGDGQHRA. The helical transmembrane segment at 266-286 threads the bilayer; it reads VINTYLCLASTVLTTVAISSF. Residues 287–297 lie on the Cytoplasmic side of the membrane; sequence SQKTGKLDMVH. A helical membrane pass occupies residues 298–318; the sequence is IQNSTLAGGVALGTAAEFMIS. Residue P319 is a topological domain, extracellular. A helical membrane pass occupies residues 320–340; sequence YGALIVGFLCGIISTMGYIFI. At 341–358 the chain is on the cytoplasmic side; that stretch reads SPFLEKTLKIQDTCGIHN. The helical transmembrane segment at 359–379 threads the bilayer; the sequence is LHAMPGVIGGIVGAITAAAAS. The Extracellular segment spans residues 380 to 411; the sequence is ESVYGKHALINTFDFTGDFKDRTVLTQGGYQA. The helical transmembrane segment at 412 to 432 threads the bilayer; it reads AGMCVSIVFGVAGGAIVGSIL. At 433-494 the chain is on the cytoplasmic side; the sequence is KLPIWGDPAD…SNFSVEHCES (62 aa).

Belongs to the ammonium transporter (TC 2.A.49) family. Rh subfamily. As to quaternary structure, homotrimer.

It localises to the apical cell membrane. In terms of biological role, functions as an ammonia transporter. May play a role in the elimination of ammonia in the gill. This is Ammonium transporter Rh type C (rhcg) from Oncorhynchus mykiss (Rainbow trout).